Consider the following 971-residue polypeptide: Outer capsid protein VP2 (971 aa).

The protein belongs to the orbivirus VP2 family.

Its subcellular location is the virion. Functionally, the VP2 protein is one of the two proteins (with VP5) which constitute the virus particle outer capsid. It is the major target of the host immunogenic response. In Epizootic hemorrhagic disease virus 1 (EHDV-1), this protein is Outer capsid protein VP2 (Segment-2).